Here is a 539-residue protein sequence, read N- to C-terminus: Chaperonin GroEL 1 (539 aa).

ATP contacts are provided by residues 30–33 (TLGP), K51, 87–91 (DGTTT), G415, 480–482 (NAA), and D496.

It belongs to the chaperonin (HSP60) family. In terms of assembly, forms a cylinder of 14 subunits composed of two heptameric rings stacked back-to-back. Interacts with the co-chaperonin GroES.

The protein localises to the cytoplasm. The enzyme catalyses ATP + H2O + a folded polypeptide = ADP + phosphate + an unfolded polypeptide.. In terms of biological role, together with its co-chaperonin GroES, plays an essential role in assisting protein folding. The GroEL-GroES system forms a nano-cage that allows encapsulation of the non-native substrate proteins and provides a physical environment optimized to promote and accelerate protein folding. This Erythrobacter litoralis (strain HTCC2594) protein is Chaperonin GroEL 1.